A 280-amino-acid chain; its full sequence is H-2 class II histocompatibility antigen gamma chain (280 aa).

The Cytoplasmic portion of the chain corresponds to 1–30 (MDDQRDLISNHEQLPILGQRARAPESNCNR). A Phosphoserine modification is found at S9. Residues 31–56 (GVLYTSVSVLVALLLAGQATTAYFLY) form a helical; Signal-anchor for type II membrane protein membrane-spanning segment. Over 57 to 280 (QQQGRLDKLT…TKQDMGQMFL (224 aa)) the chain is Extracellular. N-linked (GlcNAc...) asparagine glycans are attached at residues N114 and N120. The 62-residue stretch at 194–255 (LTKCQEEVSH…HTKSRGRHNC (62 aa)) folds into the Thyroglobulin type-1 domain. Intrachain disulfides connect C197-C216, C227-C234, and C236-C255. The tract at residues 246–268 (HTKSRGRHNCSEPLDMEDPSSGL) is disordered. S266 carries O-linked (Xyl...) (chondroitin sulfate) serine glycosylation.

As to quaternary structure, nonamer composed of three alpha/beta/gamma heterotrimers. Interacts with CD44; this complex is essential for the MIF-induced signaling cascade that results in B cell survival. In terms of assembly, interacts with the mature form of CTSL; the complex survive in neutral pH environment.

It is found in the late endosome. The protein localises to the lysosome. It localises to the cell membrane. The protein resides in the endoplasmic reticulum membrane. Its subcellular location is the golgi apparatus. It is found in the trans-Golgi network. The protein localises to the endosome. It localises to the secreted. Plays a critical role in MHC class II antigen processing by stabilizing peptide-free class II alpha/beta heterodimers in a complex soon after their synthesis and directing transport of the complex from the endoplasmic reticulum to compartments where peptide loading of class II takes place. Enhance also the stimulation of T-cell responses through interaction with CD44. Functionally, binds to the peptide-binding site of MHC class II alpha/beta heterodimers forming an alpha-beta-CLIP complex, thereby preventing the loading of antigenic peptides to the MHC class II complex until its release by HLA-DM in the endosome. Its function is as follows. Stabilizes the conformation of mature CTSL by binding to its active site and serving as a chaperone to help maintain a pool of mature enzyme in endocytic compartments and extracellular space of antigen-presenting cells (APCs). This chain is H-2 class II histocompatibility antigen gamma chain, found in Rattus norvegicus (Rat).